A 423-amino-acid polypeptide reads, in one-letter code: Gamma-glutamyl phosphate reductase (423 aa).

A compositionally biased stretch (low complexity) spans 1 to 14 (MTLQAAPRSAAAQQ). Positions 1-25 (MTLQAAPRSAAAQQREPDLRQEVHD) are disordered. The segment covering 15–25 (REPDLRQEVHD) has biased composition (basic and acidic residues).

This sequence belongs to the gamma-glutamyl phosphate reductase family.

The protein resides in the cytoplasm. The catalysed reaction is L-glutamate 5-semialdehyde + phosphate + NADP(+) = L-glutamyl 5-phosphate + NADPH + H(+). Its pathway is amino-acid biosynthesis; L-proline biosynthesis; L-glutamate 5-semialdehyde from L-glutamate: step 2/2. Its function is as follows. Catalyzes the NADPH-dependent reduction of L-glutamate 5-phosphate into L-glutamate 5-semialdehyde and phosphate. The product spontaneously undergoes cyclization to form 1-pyrroline-5-carboxylate. This chain is Gamma-glutamyl phosphate reductase, found in Mycobacterium marinum (strain ATCC BAA-535 / M).